A 505-amino-acid polypeptide reads, in one-letter code: ATP synthase subunit alpha (505 aa).

170-177 (GDRQTGKS) provides a ligand contact to ATP.

This sequence belongs to the ATPase alpha/beta chains family. As to quaternary structure, F-type ATPases have 2 components, CF(1) - the catalytic core - and CF(0) - the membrane proton channel. CF(1) has five subunits: alpha(3), beta(3), gamma(1), delta(1), epsilon(1). CF(0) has four main subunits: a(1), b(1), b'(1) and c(9-12).

The protein localises to the cellular thylakoid membrane. It catalyses the reaction ATP + H2O + 4 H(+)(in) = ADP + phosphate + 5 H(+)(out). Produces ATP from ADP in the presence of a proton gradient across the membrane. The alpha chain is a regulatory subunit. In Prochlorococcus marinus (strain MIT 9312), this protein is ATP synthase subunit alpha.